A 280-amino-acid chain; its full sequence is Shikimate kinase (280 aa).

Residue 74–84 (PGGSGLGSSSA) coordinates ATP.

Belongs to the GHMP kinase family. Archaeal shikimate kinase subfamily.

The protein localises to the cytoplasm. It catalyses the reaction shikimate + ATP = 3-phosphoshikimate + ADP + H(+). Its pathway is metabolic intermediate biosynthesis; chorismate biosynthesis; chorismate from D-erythrose 4-phosphate and phosphoenolpyruvate: step 5/7. In Archaeoglobus fulgidus (strain ATCC 49558 / DSM 4304 / JCM 9628 / NBRC 100126 / VC-16), this protein is Shikimate kinase (aroK).